Reading from the N-terminus, the 116-residue chain is Vitelline membrane protein Vm32E (116 aa).

Residues 1 to 17 form the signal peptide; that stretch reads MKIVAFTLVAFVALAGA. In terms of domain architecture, VM spans 36 to 73; sequence GYPAPPCPTNYLFSCQPNLAPAPCAQEAPAYGSAGAYT.

It belongs to the vitelline membrane family.

The protein localises to the secreted. Functionally, major early eggshell protein. This Drosophila santomea (Fruit fly) protein is Vitelline membrane protein Vm32E.